Consider the following 195-residue polypeptide: dITP/XTP pyrophosphatase (195 aa).

9–14 (TNNQGK) contacts substrate. E39 and D68 together coordinate Mg(2+). The active-site Proton acceptor is the D68. Substrate is bound by residues S69, 146 to 149 (FGYD), K169, and 174 to 175 (HR).

This sequence belongs to the HAM1 NTPase family. As to quaternary structure, homodimer. The cofactor is Mg(2+).

The enzyme catalyses XTP + H2O = XMP + diphosphate + H(+). It carries out the reaction dITP + H2O = dIMP + diphosphate + H(+). The catalysed reaction is ITP + H2O = IMP + diphosphate + H(+). Pyrophosphatase that catalyzes the hydrolysis of nucleoside triphosphates to their monophosphate derivatives, with a high preference for the non-canonical purine nucleotides XTP (xanthosine triphosphate), dITP (deoxyinosine triphosphate) and ITP. Seems to function as a house-cleaning enzyme that removes non-canonical purine nucleotides from the nucleotide pool, thus preventing their incorporation into DNA/RNA and avoiding chromosomal lesions. The polypeptide is dITP/XTP pyrophosphatase (Gloeobacter violaceus (strain ATCC 29082 / PCC 7421)).